The chain runs to 225 residues: Peptidyl-tRNA hydrolase (225 aa).

Position 14 (Tyr14) interacts with tRNA. His19 (proton acceptor) is an active-site residue. 3 residues coordinate tRNA: Phe64, Asn66, and Asn112. The tract at residues 182-225 is disordered; sequence AVALRMQPPKPEKPKPAAKAPEAQAPEAAPDERSALQKLADRFR. Low complexity predominate over residues 198–209; sequence AAKAPEAQAPEA. Basic and acidic residues predominate over residues 211 to 225; the sequence is PDERSALQKLADRFR.

The protein belongs to the PTH family. As to quaternary structure, monomer.

The protein resides in the cytoplasm. The catalysed reaction is an N-acyl-L-alpha-aminoacyl-tRNA + H2O = an N-acyl-L-amino acid + a tRNA + H(+). In terms of biological role, hydrolyzes ribosome-free peptidyl-tRNAs (with 1 or more amino acids incorporated), which drop off the ribosome during protein synthesis, or as a result of ribosome stalling. Catalyzes the release of premature peptidyl moieties from peptidyl-tRNA molecules trapped in stalled 50S ribosomal subunits, and thus maintains levels of free tRNAs and 50S ribosomes. The polypeptide is Peptidyl-tRNA hydrolase (Cereibacter sphaeroides (strain ATCC 17029 / ATH 2.4.9) (Rhodobacter sphaeroides)).